Here is a 141-residue protein sequence, read N- to C-terminus: MTMACTACPTIWTLRCQTTCSNAFTGEALPHRHPRLAADAVNETRAIVQDVRNSILLSAASAWEIAINYRLGKLPPPEPSASYVPDRMRRCGTSPLSVDHAHTAHRRASGSPSTSIRPCAHRPGTAAWPDDHHRRRPVSCL.

D99 is a binding site for Mg(2+). The interval 99 to 141 is disordered; that stretch reads DHAHTAHRRASGSPSTSIRPCAHRPGTAAWPDDHHRRRPVSCL.

Belongs to the PINc/VapC protein family. Mg(2+) is required as a cofactor.

Its function is as follows. Toxic component of a type II toxin-antitoxin (TA) system. An RNase. The cognate antitoxin is VapB16. In Mycobacterium tuberculosis (strain ATCC 25618 / H37Rv), this protein is Ribonuclease VapC16.